Here is a 780-residue protein sequence, read N- to C-terminus: Cation channel sperm-associated protein 1 (780 aa).

Disordered stretches follow at residues 1–37 (MDQNSVPEKAQNEADTNNADRFFRSHSSPPHHRPGHS), 71–306 (LSSH…QDHH), and 376–412 (QMSKKVHTQDISTKHSEDWGKEEGQFQKRKTGRLQRT). Topologically, residues 1–447 (MDQNSVPEKA…EMIRNLTQSL (447 aa)) are cytoplasmic. Positions 110 to 122 (SYGEDYHDELQRD) are enriched in basic and acidic residues. The segment covering 211 to 241 (QVPHRGWPHHHQVHHHGRSRHHEAHQHGKSP) has biased composition (basic residues). The span at 261–284 (SDYHSEYHQGDHHPSEYHHGDHPH) shows a compositional bias: basic and acidic residues. Positions 285–299 (HTQHHYHQTHRHRDY) are enriched in basic residues. The span at 387 to 401 (STKHSEDWGKEEGQF) shows a compositional bias: basic and acidic residues. Over residues 402–412 (QKRKTGRLQRT) the composition is skewed to basic residues. A helical transmembrane segment spans residues 448-469 (AFETFIFFVVCLNTVMLVAQTF). Residues 470–478 (AEVEIRGEW) lie on the Extracellular side of the membrane. Residues 479-500 (YFMALDSIFFCIYVVEALLKII) traverse the membrane as a helical segment. The Cytoplasmic portion of the chain corresponds to 501–508 (ALGLSYFF). A helical membrane pass occupies residues 509–531 (DFWNNLDFFIMAMAVLDFLLMQT). At 532-540 (HSFAIYHQS) the chain is on the extracellular side. A helical transmembrane segment spans residues 541-563 (LFRILKVFKSLRALRAIRVLRRL). Topologically, residues 564-581 (SFLTSVQEVTGTLGQSLP) are cytoplasmic. A helical transmembrane segment spans residues 582–604 (SIAAILILMFTCLFLFSAVLRAL). Topologically, residues 605–615 (FRKSDPKRFQN) are extracellular. The helical; Pore-forming intramembrane region spans 616 to 628 (IFTTIFTLFTLLT). The Extracellular segment spans residues 629-645 (LDDWSLIYMDSRAQGAW). A helical transmembrane segment spans residues 646–671 (YIIPILVIYIIIQYFIFLNLVITVLV). Over 672-780 (DSFQTALFKG…FEAGEEDFRN (109 aa)) the chain is Cytoplasmic.

This sequence belongs to the cation channel sperm-associated (TC 1.A.1.19) family. In terms of assembly, component of the CatSper complex or CatSpermasome composed of the core pore-forming members CATSPER1, CATSPER2, CATSPER3 and CATSPER4 as well as auxiliary members CATSPERB, CATSPERG, CATSPERD, CATSPERE, CATSPERZ, C2CD6/CATSPERT, TMEM249, TMEM262 and EFCAB9. HSPA1 may be an additional auxiliary complex member. The core complex members CATSPER1, CATSPER2, CATSPER3 and CATSPER4 form a heterotetrameric channel. The auxiliary CATSPERB, CATSPERG, CATSPERD and CATSPERE subunits form a pavilion-like structure over the pore which stabilizes the complex through interactions with CATSPER4, CATSPER3, CATSPER1 and CATSPER2 respectively. TMEM262/CATSPERH interacts with CATSPERB, further stabilizing the complex. C2CD6/CATSPERT interacts at least with CATSPERD and is required for targeting the CatSper complex in the flagellar membrane. Interacts with Ca(v)3.3/CACNA1I, leading to suppression of T-type calcium channel activity. As to expression, testis-specific.

The protein localises to the cell projection. The protein resides in the cilium. It localises to the flagellum membrane. It catalyses the reaction Ca(2+)(in) = Ca(2+)(out). Its activity is regulated as follows. The CatSper calcium channel is indirectly activated by extracellular progesterone and prostaglandins following the sequence: progesterone &gt; PGF1-alpha = PGE1 &gt; PGA1 &gt; PGE2 &gt;&gt; PGD2. The CatSper calcium channel is directly inhibited by endocannabinoid 2-arachidonoylglycerol (2AG). Indirect activation by progesterone takes place via the following mechanism: progesterone binds and activates the acylglycerol lipase ABHD2, which in turn mediates hydrolysis of 2AG inhibitor, relieving inhibition of the CatSper channel. The primary effect of progesterone activation is to shift voltage dependence towards more physiological, negative membrane potentials; it is not mediated by metabotropic receptors and second messengers. Sperm capacitation enhances the effect of progesterone by providing additional negative shift. Also activated by the elevation of intracellular pH. Its function is as follows. Pore-forming subunit of the CatSper complex, a sperm-specific voltage-gated calcium channel that plays a central role in calcium-dependent physiological responses essential for successful fertilization, such as sperm hyperactivation, acrosome reaction and chemotaxis towards the oocyte. The chain is Cation channel sperm-associated protein 1 (CATSPER1) from Homo sapiens (Human).